We begin with the raw amino-acid sequence, 248 residues long: 3-deoxy-manno-octulosonate cytidylyltransferase (248 aa).

The protein belongs to the KdsB family.

The protein localises to the cytoplasm. The enzyme catalyses 3-deoxy-alpha-D-manno-oct-2-ulosonate + CTP = CMP-3-deoxy-beta-D-manno-octulosonate + diphosphate. It functions in the pathway nucleotide-sugar biosynthesis; CMP-3-deoxy-D-manno-octulosonate biosynthesis; CMP-3-deoxy-D-manno-octulosonate from 3-deoxy-D-manno-octulosonate and CTP: step 1/1. The protein operates within bacterial outer membrane biogenesis; lipopolysaccharide biosynthesis. Functionally, activates KDO (a required 8-carbon sugar) for incorporation into bacterial lipopolysaccharide in Gram-negative bacteria. The polypeptide is 3-deoxy-manno-octulosonate cytidylyltransferase (Escherichia fergusonii (strain ATCC 35469 / DSM 13698 / CCUG 18766 / IAM 14443 / JCM 21226 / LMG 7866 / NBRC 102419 / NCTC 12128 / CDC 0568-73)).